Reading from the N-terminus, the 139-residue chain is Translation initiation factor 2 subunit beta (139 aa).

Belongs to the eIF-2-beta/eIF-5 family. As to quaternary structure, heterotrimer composed of an alpha, a beta and a gamma chain.

EIF-2 functions in the early steps of protein synthesis by forming a ternary complex with GTP and initiator tRNA. The protein is Translation initiation factor 2 subunit beta of Sulfurisphaera tokodaii (strain DSM 16993 / JCM 10545 / NBRC 100140 / 7) (Sulfolobus tokodaii).